Consider the following 681-residue polypeptide: Anaphase-promoting complex subunit 2 (681 aa).

The protein belongs to the cullin family. In terms of assembly, the APC/C is composed of at least 13 subunits: apc1, apc2, nuc2, apc4, apc5, cut9, apc8, apc10, apc11, hcn1, apc13, apc14 and apc15.

Functionally, component of the anaphase-promoting complex/cyclosome (APC/C), a cell cycle-regulated E3 ubiquitin-protein ligase complex that controls progression through mitosis and the G1 phase of the cell cycle. The APC/C is thought to confer substrate specificity and, in the presence of ubiquitin-conjugating E2 enzymes, it catalyzes the formation of protein-ubiquitin conjugates that are subsequently degraded by the 26S proteasome. The polypeptide is Anaphase-promoting complex subunit 2 (apc2) (Schizosaccharomyces pombe (strain 972 / ATCC 24843) (Fission yeast)).